Consider the following 56-residue polypeptide: Protein SspF (56 aa).

Belongs to the alpha/beta-type SASP family.

May play some important role in either sporulation or the dormant spore. The polypeptide is Protein SspF (sspF) (Priestia megaterium (strain ATCC 12872 / QMB1551) (Bacillus megaterium)).